We begin with the raw amino-acid sequence, 449 residues long: 3-phosphoshikimate 1-carboxyvinyltransferase (449 aa).

3-phosphoshikimate-binding residues include K28, S29, and R33. K28 contributes to the phosphoenolpyruvate binding site. Residues G105 and R133 each coordinate phosphoenolpyruvate. Residues S179, Q181, D332, and K359 each contribute to the 3-phosphoshikimate site. Position 181 (Q181) interacts with phosphoenolpyruvate. Residue D332 is the Proton acceptor of the active site. 2 residues coordinate phosphoenolpyruvate: R363 and R406.

The protein belongs to the EPSP synthase family. In terms of assembly, monomer.

It is found in the cytoplasm. The enzyme catalyses 3-phosphoshikimate + phosphoenolpyruvate = 5-O-(1-carboxyvinyl)-3-phosphoshikimate + phosphate. Its pathway is metabolic intermediate biosynthesis; chorismate biosynthesis; chorismate from D-erythrose 4-phosphate and phosphoenolpyruvate: step 6/7. Functionally, catalyzes the transfer of the enolpyruvyl moiety of phosphoenolpyruvate (PEP) to the 5-hydroxyl of shikimate-3-phosphate (S3P) to produce enolpyruvyl shikimate-3-phosphate and inorganic phosphate. The protein is 3-phosphoshikimate 1-carboxyvinyltransferase of Nitrobacter hamburgensis (strain DSM 10229 / NCIMB 13809 / X14).